Consider the following 478-residue polypeptide: Cysteine--tRNA ligase (478 aa).

Cysteine 29 provides a ligand contact to Zn(2+). Residues 31 to 41 (PTVYDIPHIGN) carry the 'HIGH' region motif. Zn(2+) contacts are provided by cysteine 216, histidine 241, and glutamate 245. Residues 274–278 (KMSKS) carry the 'KMSKS' region motif. Position 277 (lysine 277) interacts with ATP.

This sequence belongs to the class-I aminoacyl-tRNA synthetase family. As to quaternary structure, monomer. Requires Zn(2+) as cofactor.

Its subcellular location is the cytoplasm. The enzyme catalyses tRNA(Cys) + L-cysteine + ATP = L-cysteinyl-tRNA(Cys) + AMP + diphosphate. This chain is Cysteine--tRNA ligase, found in Orientia tsutsugamushi (strain Ikeda) (Rickettsia tsutsugamushi).